The primary structure comprises 90 residues: Secretoglobin family 1D member 1 (90 aa).

Positions 1 to 21 (MRLSVCLLLLTLALCCYRANA) are cleaved as a signal peptide.

In terms of assembly, heterodimer of a lipophilin A and a lipophilin C (mammaglobin B) monomer associated head to head. As to expression, expressed in lachrymal gland, thymus, kidney, testis, ovary and salivary gland.

Its subcellular location is the secreted. Its function is as follows. May bind androgens and other steroids, may also bind estramustine, a chemotherapeutic agent used for prostate cancer. May be under transcriptional regulation of steroid hormones. The sequence is that of Secretoglobin family 1D member 1 (SCGB1D1) from Homo sapiens (Human).